A 341-amino-acid polypeptide reads, in one-letter code: Heme A synthase (341 aa).

8 helical membrane-spanning segments follow: residues 7–27 (VTVWLGVCCSMTLLMVVIGGI), 92–112 (LFGRALGAVFCLPIPYFAITK), 118–138 (MVAKLLMVALLGGMQGAMGWF), 159–179 (LFLTILLFSILWHSFLRCAGV), 190–210 (FFTAAAVVGLTVLQMVLGALV), 253–273 (FLHRLVAVLIVVCAAPLPFWL), 280–300 (LFLACVALQFLLGVATLVSVV), and 302–322 (IFLAAMHQVFGFVTLAAGVHM). Histidine 255 is a binding site for heme. Histidine 308 provides a ligand contact to heme.

It belongs to the COX15/CtaA family. Type 2 subfamily. In terms of assembly, interacts with CtaB. The cofactor is heme b.

It is found in the cell membrane. It catalyses the reaction Fe(II)-heme o + 2 A + H2O = Fe(II)-heme a + 2 AH2. Its pathway is porphyrin-containing compound metabolism; heme A biosynthesis; heme A from heme O: step 1/1. In terms of biological role, catalyzes the conversion of heme O to heme A by two successive hydroxylations of the methyl group at C8. The first hydroxylation forms heme I, the second hydroxylation results in an unstable dihydroxymethyl group, which spontaneously dehydrates, resulting in the formyl group of heme A. This chain is Heme A synthase, found in Anaplasma marginale (strain Florida).